The primary structure comprises 400 residues: Tryptophan synthase beta chain (400 aa).

Residue K95 is modified to N6-(pyridoxal phosphate)lysine.

Belongs to the TrpB family. As to quaternary structure, tetramer of two alpha and two beta chains. The cofactor is pyridoxal 5'-phosphate.

It catalyses the reaction (1S,2R)-1-C-(indol-3-yl)glycerol 3-phosphate + L-serine = D-glyceraldehyde 3-phosphate + L-tryptophan + H2O. It functions in the pathway amino-acid biosynthesis; L-tryptophan biosynthesis; L-tryptophan from chorismate: step 5/5. Functionally, the beta subunit is responsible for the synthesis of L-tryptophan from indole and L-serine. The chain is Tryptophan synthase beta chain from Chlorobaculum tepidum (strain ATCC 49652 / DSM 12025 / NBRC 103806 / TLS) (Chlorobium tepidum).